We begin with the raw amino-acid sequence, 216 residues long: Large ribosomal subunit protein eL15 (216 aa).

Residues 170 to 188 (RGLRKSKGFKGTVKHKWSR) show a composition bias toward basic residues. The interval 170–201 (RGLRKSKGFKGTVKHKWSRKQKEREEKKRHEA) is disordered. The span at 189–201 (KQKEREEKKRHEA) shows a compositional bias: basic and acidic residues.

This sequence belongs to the eukaryotic ribosomal protein eL15 family.

This Saccharolobus islandicus (strain M.16.27) (Sulfolobus islandicus) protein is Large ribosomal subunit protein eL15.